The primary structure comprises 118 residues: NADH-quinone oxidoreductase subunit A (118 aa).

A run of 3 helical transmembrane segments spans residues 5-25 (FAAVGIALVVAIAINLIMMLM), 61-81 (FLYALVFTAFDVETVFLFPWA), and 90-110 (FAFIEMFVFIVILLVGFWYAW).

The protein belongs to the complex I subunit 3 family. NDH-1 is composed of 14 different subunits. Subunits NuoA, H, J, K, L, M, N constitute the membrane sector of the complex.

Its subcellular location is the cell membrane. It catalyses the reaction a quinone + NADH + 5 H(+)(in) = a quinol + NAD(+) + 4 H(+)(out). Its function is as follows. NDH-1 shuttles electrons from NADH, via FMN and iron-sulfur (Fe-S) centers, to quinones in the respiratory chain. The immediate electron acceptor for the enzyme in this species is believed to be a menaquinone. Couples the redox reaction to proton translocation (for every two electrons transferred, four hydrogen ions are translocated across the cytoplasmic membrane), and thus conserves the redox energy in a proton gradient. The sequence is that of NADH-quinone oxidoreductase subunit A from Desulfitobacterium hafniense (strain Y51).